Reading from the N-terminus, the 256-residue chain is Cell division protein DivIB (256 aa).

The Cytoplasmic portion of the chain corresponds to 1-23 (MSKDLISTDEYIKIKKKRKRIKK). Residues 24–44 (IVVLFIFLISILVTLCLKIPY) form a helical membrane-spanning segment. In terms of domain architecture, POTRA spans 45–113 (FNIESIEIKG…NKLQIYVKER (69 aa)). Over 45–256 (FNIESIEIKG…EGNPVFYIEK (212 aa)) the chain is Extracellular.

This sequence belongs to the FtsQ/DivIB family. DivIB subfamily.

The protein localises to the cell membrane. Its function is as follows. Cell division protein that may be involved in stabilizing or promoting the assembly of the division complex. In Clostridium botulinum (strain Hall / ATCC 3502 / NCTC 13319 / Type A), this protein is Cell division protein DivIB.